The primary structure comprises 463 residues: UDP-N-acetylmuramate--L-alanine ligase (463 aa).

112–118 (GTHGKTT) contacts ATP.

It belongs to the MurCDEF family.

The protein localises to the cytoplasm. The enzyme catalyses UDP-N-acetyl-alpha-D-muramate + L-alanine + ATP = UDP-N-acetyl-alpha-D-muramoyl-L-alanine + ADP + phosphate + H(+). Its pathway is cell wall biogenesis; peptidoglycan biosynthesis. Its function is as follows. Cell wall formation. In Dechloromonas aromatica (strain RCB), this protein is UDP-N-acetylmuramate--L-alanine ligase.